Here is a 316-residue protein sequence, read N- to C-terminus: L-lactate dehydrogenase (316 aa).

NAD(+)-binding positions include Val-15, Asp-37, Lys-42, Tyr-68, and 82 to 83; that span reads GL. Residues Gln-85, Arg-91, and 123–126 contribute to the substrate site; that span reads NPVD. NAD(+)-binding positions include 121-123 and Thr-146; that span reads ASN. Residue 151–154 coordinates substrate; the sequence is DTSR. The beta-D-fructose 1,6-bisphosphate site is built by Arg-156 and His-171. Catalysis depends on His-178, which acts as the Proton acceptor. The residue at position 222 (Tyr-222) is a Phosphotyrosine. Thr-231 contacts substrate.

Belongs to the LDH/MDH superfamily. LDH family. Homotetramer.

It is found in the cytoplasm. The enzyme catalyses (S)-lactate + NAD(+) = pyruvate + NADH + H(+). It participates in fermentation; pyruvate fermentation to lactate; (S)-lactate from pyruvate: step 1/1. Allosterically activated by fructose 1,6-bisphosphate (FBP). Its function is as follows. Catalyzes the conversion of lactate to pyruvate. The protein is L-lactate dehydrogenase of Borreliella afzelii (strain PKo) (Borrelia afzelii).